A 318-amino-acid chain; its full sequence is Olfactory receptor 51E1 (318 aa).

Topologically, residues 1 to 31 (MMVDPNGNESSATYFILIGLPGLEEAQFWLA) are extracellular. A glycan (N-linked (GlcNAc...) asparagine) is linked at N8. A helical transmembrane segment spans residues 32-52 (FPLCSLYLIAVLGNLTIIYIV). Topologically, residues 53 to 60 (RTEHSLHE) are cytoplasmic. The helical transmembrane segment at 61 to 81 (PMYIFLCMLSGIDILISTSSM) threads the bilayer. Residues 82-100 (PKMLAIFWFNSTTIQFDAC) are Extracellular-facing. N91 is a glycosylation site (N-linked (GlcNAc...) asparagine). C100 and C182 are oxidised to a cystine. A helical membrane pass occupies residues 101–123 (LLQMFAIHSLSGMESTVLLAMAF). Residues 124–145 (DRYVAICHPLRHATVLTLPRVT) are Cytoplasmic-facing. A helical membrane pass occupies residues 146-166 (KIGVAAVVRGAALMAPLPVFI). Topologically, residues 167 to 198 (KQLPFCRSNILSHSYCLHQDVMKLACDDIRVN) are extracellular. Residues 199 to 219 (VVYGLIVIISAIGLDSLLISF) traverse the membrane as a helical segment. The Cytoplasmic portion of the chain corresponds to 220-239 (SYLLILKTVLGLTREAQAKA). The helical transmembrane segment at 240-260 (FGTCVSHVCAVFIFYVPFIGL) threads the bilayer. The Extracellular segment spans residues 261–275 (SMVHRFSKRRDSPLP). The helical transmembrane segment at 276–296 (VILANIYLLVPPVLNPIVYGV) threads the bilayer. The Cytoplasmic segment spans residues 297–318 (KTKEIRQRILRLFHVATHASEP).

This sequence belongs to the G-protein coupled receptor 1 family. Highly expressed in prostate. Very low levels may be detected in some other tissues, such as placenta, skeletal muscle, heart, ovary and testis. Up-regulated in prostate cancers.

The protein resides in the cell membrane. Functionally, odorant receptor. This chain is Olfactory receptor 51E1 (OR51E1), found in Homo sapiens (Human).